The primary structure comprises 533 residues: Solute carrier family 2, facilitated glucose transporter member 2 (533 aa).

Residues Met1 to Leu17 lie on the Cytoplasmic side of the membrane. Residues Val18–Ile38 traverse the membrane as a helical segment. Residues Asn39–Ser110 lie on the Extracellular side of the membrane. N-linked (GlcNAc...) asparagine glycans are attached at residues Asn64 and Asn69. A helical transmembrane segment spans residues Leu111–Gly131. Residues Asp132–Arg136 lie on the Cytoplasmic side of the membrane. The chain crosses the membrane as a helical span at residues Val137–Ala157. At Lys158–His163 the chain is on the extracellular side. A helical transmembrane segment spans residues Ile164–Val184. Topologically, residues Pro185–Ala199 are cytoplasmic. Residues Leu200 to Leu220 traverse the membrane as a helical segment. D-glucose is bound at residue Gln205. The Extracellular portion of the chain corresponds to Asp221–Leu229. Residues Trp230 to Leu250 traverse the membrane as a helical segment. The Cytoplasmic portion of the chain corresponds to Cys251–Ala315. The helical transmembrane segment at Val316 to Tyr336 threads the bilayer. Residues Gln326 to Gln327 and Asn332 each bind D-glucose. At Tyr337 to Pro350 the chain is on the extracellular side. The helical transmembrane segment at Val351 to Leu371 threads the bilayer. Residue Asn361 participates in D-glucose binding. The Cytoplasmic portion of the chain corresponds to Val372 to Ser379. A helical membrane pass occupies residues Leu380–Val400. At Leu401 to Met413 the chain is on the extracellular side. Residues Val414–Ile434 form a helical membrane-spanning segment. 2 residues coordinate D-glucose: Glu424 and Trp432. Over Val435–Pro445 the chain is Cytoplasmic. The chain crosses the membrane as a helical span at residues Ala446 to Phe466. The Extracellular segment spans residues Gln467–Asp471. A helical transmembrane segment spans residues Leu472–Ala492. Over Tyr493–Ala533 the chain is Cytoplasmic.

This sequence belongs to the major facilitator superfamily. Sugar transporter (TC 2.A.1.1) family. Glucose transporter subfamily.

The protein localises to the cell membrane. It catalyses the reaction D-glucose(out) = D-glucose(in). The catalysed reaction is D-fructose(out) = D-fructose(in). It carries out the reaction L-dehydroascorbate(out) = L-dehydroascorbate(in). The enzyme catalyses D-galactose(in) = D-galactose(out). Its activity is regulated as follows. D-glucose and maltose competitively inhibit fructose transport. D-glucose, D-fructose and maltose inhibit deoxyglucose transport. Facilitative hexose transporter that mediates the transport of glucose, fructose and galactose. Likely mediates the bidirectional transfer of glucose across the plasma membrane of hepatocytes and is responsible for uptake of glucose by the beta cells. In Gallus gallus (Chicken), this protein is Solute carrier family 2, facilitated glucose transporter member 2.